Here is a 412-residue protein sequence, read N- to C-terminus: Proteasome-activating nucleotidase 2 (412 aa).

The stretch at 28 to 74 (LRQHFERMVDVNRELDQRLQNADDRHAELVDEVDQMKARNEALKTAS) forms a coiled coil. ATP contacts are provided by residues 196–201 (GTGKTM) and histidine 335. The docks into pockets in the proteasome alpha-ring to cause gate opening stretch occupies residues 409–412 (DYQY).

It belongs to the AAA ATPase family. In terms of assembly, homohexamer. The hexameric complex has a two-ring architecture resembling a top hat that caps the 20S proteasome core at one or both ends. Upon ATP-binding, the C-terminus of PAN interacts with the alpha-rings of the proteasome core by binding to the intersubunit pockets.

Its subcellular location is the cytoplasm. Functionally, ATPase which is responsible for recognizing, binding, unfolding and translocation of substrate proteins into the archaeal 20S proteasome core particle. Is essential for opening the gate of the 20S proteasome via an interaction with its C-terminus, thereby allowing substrate entry and access to the site of proteolysis. Thus, the C-termini of the proteasomal ATPase function like a 'key in a lock' to induce gate opening and therefore regulate proteolysis. Unfolding activity requires energy from ATP hydrolysis, whereas ATP binding alone promotes ATPase-20S proteasome association which triggers gate opening, and supports translocation of unfolded substrates. This Haloferax volcanii (strain ATCC 29605 / DSM 3757 / JCM 8879 / NBRC 14742 / NCIMB 2012 / VKM B-1768 / DS2) (Halobacterium volcanii) protein is Proteasome-activating nucleotidase 2.